The primary structure comprises 292 residues: Coatomer subunit epsilon-1 (292 aa).

The protein belongs to the COPE family. As to quaternary structure, oligomeric complex that consists of at least the alpha, beta, beta', gamma, delta, epsilon and zeta subunits.

It localises to the cytoplasm. It is found in the golgi apparatus membrane. The protein resides in the cytoplasmic vesicle. Its subcellular location is the COPI-coated vesicle membrane. Its function is as follows. The coatomer is a cytosolic protein complex that binds to dilysine motifs and reversibly associates with Golgi non-clathrin-coated vesicles, which further mediate biosynthetic protein transport from the ER, via the Golgi up to the trans Golgi network. The coatomer complex is required for budding from Golgi membranes, and is essential for the retrograde Golgi-to-ER transport of dilysine-tagged proteins. This is Coatomer subunit epsilon-1 from Arabidopsis thaliana (Mouse-ear cress).